Here is a 494-residue protein sequence, read N- to C-terminus: Probable cytosol aminopeptidase (494 aa).

2 residues coordinate Mn(2+): Lys260 and Asp265. The active site involves Lys272. Mn(2+) contacts are provided by Asp283, Asp342, and Glu344. Arg346 is a catalytic residue.

The protein belongs to the peptidase M17 family. Requires Mn(2+) as cofactor.

The protein resides in the cytoplasm. The catalysed reaction is Release of an N-terminal amino acid, Xaa-|-Yaa-, in which Xaa is preferably Leu, but may be other amino acids including Pro although not Arg or Lys, and Yaa may be Pro. Amino acid amides and methyl esters are also readily hydrolyzed, but rates on arylamides are exceedingly low.. It catalyses the reaction Release of an N-terminal amino acid, preferentially leucine, but not glutamic or aspartic acids.. Functionally, presumably involved in the processing and regular turnover of intracellular proteins. Catalyzes the removal of unsubstituted N-terminal amino acids from various peptides. This Bacillus anthracis (strain CDC 684 / NRRL 3495) protein is Probable cytosol aminopeptidase.